We begin with the raw amino-acid sequence, 309 residues long: MALTYVFRSIRTEFSKVCTVHHAQSLHTGFPTLAAEKALLMKLRKSTGYTFINCKKALEKCDNDITKAESWLHEQAQKEGWSKASKLEGRRAKEGLIGLFVGDKAAVMVEVNCETDFVARNEKFQQLVKDVAFATMAHHSSKNQGQTGYVKSLLAAEDLSKLNLGEDASLADQLALTIGRLGENISVRRAVTVGVPAGWHIGSYIHGGVAGQSDMAMGRYGALVVFQGGKDGALDTLGRKLGQHVVGEAPVSLGNMDDLPCGDAETRLLPQSFLPDPSRTVAQYLTEQGARVLDFVRFQCGEAGSDGAH.

The protein belongs to the EF-Ts family.

It is found in the mitochondrion. Associates with the EF-Tu.GDP complex and induces the exchange of GDP to GTP. It remains bound to the aminoacyl-tRNA.EF-Tu.GTP complex up to the GTP hydrolysis stage on the ribosome. This Salmo salar (Atlantic salmon) protein is Elongation factor Ts, mitochondrial (tsfm).